Here is a 405-residue protein sequence, read N- to C-terminus: Growth/differentiation factor 11 (405 aa).

The signal sequence occupies residues 1–24 (MVLAAPLLLGFLLLALELRPRGEA). Residues 25–296 (AEGPAAAAAA…VLENTKRSRR (272 aa)) constitute a propeptide that is removed on maturation. N-linked (GlcNAc...) asparagine glycosylation is present at Asn92. Disulfide bonds link Cys302-Cys312, Cys311-Cys370, Cys339-Cys402, and Cys343-Cys404.

The protein belongs to the TGF-beta family. As to quaternary structure, homodimer; disulfide-linked. Interacts directly with ACVR2B. Interacts directly with ACVR2A. Interacts with ACVR1B, TGFBR1 and ACVR1C in an ACVR2B-dependent manner. Interacts with FST isoform 2/FS288. In terms of processing, synthesized as large precursor molecule that undergoes proteolytic cleavage by furin-like proteases. This produces an inactive form consisting of the mature C-terminal portion non-covalently bound to its cleaved N-terminal propeptide. Activation of the mature form requires additional cleavage of the propeptide by a tolloid-like metalloproteinase.

It is found in the secreted. Functionally, secreted signal that acts globally to regulate anterior/posterior axial patterning during development. May play critical roles in patterning both mesodermal and neural tissues. It is required for proper vertebral patterning and orofacial development. Signals through activin receptors type-2, ACVR2A and ACVR2B, and activin receptors type-1, ACVR1B, ACVR1C and TGFBR1 leading to the phosphorylation of SMAD2 and SMAD3. In Rattus norvegicus (Rat), this protein is Growth/differentiation factor 11 (Gdf11).